A 447-amino-acid polypeptide reads, in one-letter code: MAGVGGGNDFQWCFSQVKGAIDEDVAEADIISTVEFNCSGELLATGDKGGRVVIFQREQENKSRPHSRGEYNVYSTFQSHEPEFDYLKSLEIEEKINKIRWLPQQNAANFLLSTNDKTIKLWKISERDKRVEGYNLKDDDGRLRDPFRITSLRVPILKPMDLMVEASPRRIFANAHTYHINSISVNSDHQTYLSADDLRVNLWHLEITDRSFNIVDIKPANMEELTEVITAAEFHPHHCHMFVYSSSKGTIRLCDMRDAALCDRHSKFFEEPEDPSSRSFFSEIISSISDVKFSHSGRYMMTRDYLSVKVWDLNMESRPVETYQVHEYLRSKLCSLYENDCIFDKFECCWNGSDSSIMTGSYNNFFRMFDRNTRRDITLEASRESSKPRATLKPRKVCTGGKRKKDEINVDSLDFNKKILHTAWHPTDNIIAVAATNNLYIFQDKVN.

7 WD repeats span residues 26 to 65, 91 to 132, 175 to 213, 224 to 264, 283 to 321, 338 to 379, and 414 to 447; these read AEAD…KSRP, EIEE…KRVE, AHTY…RSFN, ELTE…LCDR, EIIS…RPVE, ENDC…DITL, and DFNK…DKVN.

Belongs to the phosphatase 2A regulatory subunit B family. As to quaternary structure, PP2A consists of a common heterodimeric core enzyme, composed of a 36 kDa catalytic subunit (subunit C) and a 65 kDa constant regulatory subunit (PR65 or subunit A), that associates with a variety of regulatory subunits. Proteins that associate with the core dimer include three families of regulatory subunits B (the R2/B/PR55/B55, R3/B''/PR72/PR130/PR59 and R5/B'/B56 families), the 48 kDa variable regulatory subunit, viral proteins, and cell signaling molecules. Interacts with ensa (when phosphorylated at 'Ser-67') and arpp19 (when phosphorylated at 'Ser-67'), leading to inhibit PP2A activity.

The protein resides in the cytoplasm. In terms of biological role, substrate-recognition subunit of protein phosphatase 2A (PP2A) that plays a key role in cell cycle by controlling mitosis entry and exit. The activity of PP2A complexes containing ppp2r2d (PR55-delta) fluctuate during the cell cycle: the activity is high in interphase and low in mitosis. During mitosis, activity of PP2A is inhibited via interaction with phosphorylated ensa and arpp19 inhibitors. PP2A complexes containing ppp2r2d (PR55-delta) also regulate the activity of TGF-beta/Activin/Nodal signaling by restricting receptor activity. Within the PP2A complexes, the B regulatory subunits modulate substrate selectivity and catalytic activity, and may also direct the localization of the catalytic enzyme to a particular subcellular compartment. This is Serine/threonine-protein phosphatase 2A 55 kDa regulatory subunit B delta isoform (ppp2r2d) from Xenopus laevis (African clawed frog).